The sequence spans 461 residues: V-type ATP synthase beta chain 1 (461 aa).

The protein belongs to the ATPase alpha/beta chains family.

Its function is as follows. Produces ATP from ADP in the presence of a proton gradient across the membrane. The V-type beta chain is a regulatory subunit. This is V-type ATP synthase beta chain 1 from Clostridium tetani (strain Massachusetts / E88).